The chain runs to 634 residues: DNA-directed RNA polymerase subunit gamma (634 aa).

Zn(2+)-binding residues include C74, C76, C89, and C92. D471, D473, and D475 together coordinate Mg(2+).

It belongs to the RNA polymerase beta' chain family. RpoC1 subfamily. As to quaternary structure, in cyanobacteria the RNAP catalytic core is composed of 2 alpha, 1 beta, 1 beta', 1 gamma and 1 omega subunit. When a sigma factor is associated with the core the holoenzyme is formed, which can initiate transcription. It depends on Mg(2+) as a cofactor. Requires Zn(2+) as cofactor.

The catalysed reaction is RNA(n) + a ribonucleoside 5'-triphosphate = RNA(n+1) + diphosphate. Functionally, DNA-dependent RNA polymerase catalyzes the transcription of DNA into RNA using the four ribonucleoside triphosphates as substrates. In Synechococcus sp. (strain WH7803), this protein is DNA-directed RNA polymerase subunit gamma.